A 107-amino-acid chain; its full sequence is L-rhamnose mutarotase (107 aa).

Tyrosine 21 serves as a coordination point for substrate. Residue histidine 25 is the Proton donor of the active site. Substrate contacts are provided by residues tyrosine 44 and 79 to 80 (WW).

It belongs to the rhamnose mutarotase family. In terms of assembly, homodimer.

Its subcellular location is the cytoplasm. It catalyses the reaction alpha-L-rhamnose = beta-L-rhamnose. Its pathway is carbohydrate metabolism; L-rhamnose metabolism. Involved in the anomeric conversion of L-rhamnose. The sequence is that of L-rhamnose mutarotase from Agrobacterium fabrum (strain C58 / ATCC 33970) (Agrobacterium tumefaciens (strain C58)).